A 427-amino-acid polypeptide reads, in one-letter code: Phosphoribosylamine--glycine ligase (427 aa).

One can recognise an ATP-grasp domain in the interval 107-312; sequence KDLCARFNIP…LLALVNAAVD (206 aa). ATP is bound at residue 133-193; it reads IRQQGAPIVV…EEFLDGEEAS (61 aa). Positions 282 and 284 each coordinate Mg(2+).

It belongs to the GARS family. It depends on Mg(2+) as a cofactor. The cofactor is Mn(2+).

It catalyses the reaction 5-phospho-beta-D-ribosylamine + glycine + ATP = N(1)-(5-phospho-beta-D-ribosyl)glycinamide + ADP + phosphate + H(+). It functions in the pathway purine metabolism; IMP biosynthesis via de novo pathway; N(1)-(5-phospho-D-ribosyl)glycinamide from 5-phospho-alpha-D-ribose 1-diphosphate: step 2/2. This Brucella melitensis biotype 1 (strain ATCC 23456 / CCUG 17765 / NCTC 10094 / 16M) protein is Phosphoribosylamine--glycine ligase.